Consider the following 949-residue polypeptide: Glycine dehydrogenase (decarboxylating) (949 aa).

The residue at position 704 (Lys704) is an N6-(pyridoxal phosphate)lysine.

The protein belongs to the GcvP family. In terms of assembly, the glycine cleavage system is composed of four proteins: P, T, L and H. Requires pyridoxal 5'-phosphate as cofactor.

It catalyses the reaction N(6)-[(R)-lipoyl]-L-lysyl-[glycine-cleavage complex H protein] + glycine + H(+) = N(6)-[(R)-S(8)-aminomethyldihydrolipoyl]-L-lysyl-[glycine-cleavage complex H protein] + CO2. Its function is as follows. The glycine cleavage system catalyzes the degradation of glycine. The P protein binds the alpha-amino group of glycine through its pyridoxal phosphate cofactor; CO(2) is released and the remaining methylamine moiety is then transferred to the lipoamide cofactor of the H protein. This Bacteroides thetaiotaomicron (strain ATCC 29148 / DSM 2079 / JCM 5827 / CCUG 10774 / NCTC 10582 / VPI-5482 / E50) protein is Glycine dehydrogenase (decarboxylating).